A 258-amino-acid polypeptide reads, in one-letter code: Short-chain dehydrogenase/reductase FrzI (258 aa).

NADP(+) contacts are provided by Ile-21, Asn-41, and Asn-94. Catalysis depends on proton donor residues Ser-143 and Ser-144. NADP(+) is bound by residues Tyr-157, Lys-161, Val-191, and Thr-193. Tyr-157 serves as the catalytic Proton acceptor. Lys-161 (lowers pKa of active site Tyr) is an active-site residue.

The protein belongs to the short-chain dehydrogenases/reductases (SDR) family.

The catalysed reaction is (1S,3S,6S,7S,8R)-7-hydroxy-6-[(4-methoxyphenyl)methyl]-3-(methylamino)-5-azatricyclo[6.3.1.0(1,5)]dodecan-9-one + NADPH + H(+) = (1S,3S,6S,7S,8S,9S)-6-[(4-methoxyphenyl)methyl]-3-(methylamino)-5-azatricyclo[6.3.1.0(1,5)]dodecane-7,9-diol + NADP(+). It participates in secondary metabolite biosynthesis. Short-chain dehydrogenase/reductase; part of the gene cluster that mediates the biosynthesis of the alkaloid (-)-FR901483, a potent immunosuppressant that shows efficacy in animal models and a probable inhibitor of purine nucleotide biosynthesis by targeting phosphoribosylpyrophosphate amidotransferase (PPAT). Within the pathway, FrzI catalyzes the formation of dephospho-(-)-FR901483 from the aza-tricyclic intermediate produced by FrzH. The biosynthesis of (-)-FR901483 starts with the condensation of two L-tyrosines to yield (S,S)-dityrosyl-piperazine. This process occurs in 3 steps with the non-canonical nonribosomal peptide synthetase FrzA catalyzing the reduction of L-tyrosine into L-tyrosinal, the spontaneous condensation of 2 L-tyrosinal units, and the subsequent reduction by the NmrA-like family domain-containing oxidoreductase FrzB. The cytochrome P450 monooxygenase FrzC then performs coupling between N10 and C1' to morph the piperazine into a 1,4-diazabicyclo[3.2.1]octane spiro-fused to a 2,5-cyclohexadienone. The dienone portion is further reduced to cyclohexanone by the flavin-dependent reductase FrzD. The methyltranserases (MTs) FrzE and FrzF are then involved in the methylation at the C10' amine and the C4 phenolic oxygen, respectively. The order of the two MTs appear to be interchangeable. Cleavage of the C9-N10' bond by the dioxygenase FrzG then leads to formation of a conjugated iminium. In addition to the oxidation of C9, an additional dehydrogenation between C7 and C8 can occur to give a likely shunt product. The next biosynthetic step is the intramolecular aldol condensation catalyzed by the newly identified aldolase FrzH to yield an aza-tricyclic product with the formation of a C9-C3' bond. The short-chain dehydrogenase/reductase FrzI then produces dephospho-(-)-FR901483 that is phosphorylated at C4'-OH into (-)-FR901483 by the phosphotransferase FrzJ. This chain is Short-chain dehydrogenase/reductase FrzI, found in Cladobotryum sp.